We begin with the raw amino-acid sequence, 179 residues long: Alkyl hydroperoxide reductase AhpD (179 aa).

The Proton donor role is filled by C130. A disulfide bond links C130 and C133. C133 serves as the catalytic Cysteine sulfenic acid (-SOH) intermediate.

The protein belongs to the AhpD family. In terms of assembly, homotrimer.

The catalysed reaction is N(6)-[(R)-dihydrolipoyl]-L-lysyl-[lipoyl-carrier protein] + a hydroperoxide = N(6)-[(R)-lipoyl]-L-lysyl-[lipoyl-carrier protein] + an alcohol + H2O. Antioxidant protein with alkyl hydroperoxidase activity. Required for the reduction of the AhpC active site cysteine residues and for the regeneration of the AhpC enzyme activity. The sequence is that of Alkyl hydroperoxide reductase AhpD from Nocardia farcinica (strain IFM 10152).